Here is a 1296-residue protein sequence, read N- to C-terminus: MDSVIESEEGLKVDSPNRADAETSNSKIHEEDEKELKTESDLKEEKKKTEKNKQEEDEKTKTVPFHKLFAFADSFDIILMILGTIGAVGNGLGFPIMTILFGDVIDVFGQNQNSSDVSDKIAKVALKFVYLGLGTLVAALLQVSGWMISGERQAGRIRSLYLQTILRQDIAFFDVETNTGEVVGRMSGDTVLIQDAMGEKVGKAIQLVSTFIGGFVIAFTEGWLLTLVMVSSIPLLVMSGAALAIVISKMASRGQTSYAKAAVVVEQTVGSIRTVASFTGEKQAISNYNKHLVSAYRAGVFEGASTGLGLGTLNIVIFCTYALAVWYGGKMILEKGYTGGQVLIIIFAVLTGSMSLGQASPCLSAFAAGQAAAYKMFEAIKRKPEIDASDTTGKVLDDIRGDIELNNVNFSYPARPEEQIFRGFSLSISSGSTVALVGQSGSGKSTVVSLIERFYDPQSGEVRIDGINLKEFQLKWIRSKIGLVSQEPVLFTSSIKENIAYGKENATVEEIRKATELANASKFIDKLPQGLDTMVGEHGTQLSGGQKQRIAVARAILKDPRILLLDEATSALDAESERIVQEALDRIMVNRTTVVVAHRLSTVRNADMIAVIHQGKIVEKGSHSELLRDPEGAYSQLIRLQEDTKQTEDSTDEQKLSMESMKRSSLRKSSLSRSLSKRSSSFSMFGFPAGIDTNNEAIPEKDIKVSTPIKEKKVSFFRVAALNKPEIPMLILGSIAAVLNGVILPIFGILISSVIKAFFKPPEQLKSDTRFWAIIFMLLGVASMVVFPAQTIFFSIAGCKLVQRIRSMCFEKVVRMEVGWFDETENSSGAIGARLSADAATVRGLVGDALAQTVQNLASVTAGLVIAFVASWQLAFIVLAMLPLIGLNGYIYMKFMVGFSADAKRMYEEASQVANDAVGSIRTVASFCAEEKVMKMYKKKCEGPMRTGIRQGIVSGIGFGVSFFVLFSSYAASFYAGARLVDDGKTTFDSVFRVFFALTMAAVAISQSSSLSPDSSKASNAAASIFAVIDRESKIDPSDESGRVLDNVKGDIELRHISFKYPSRPDVQIFQDLCLSIRAGKTIALVGESGSGKSTVIALLQRFYDPDSGQITLDGVEIKTLQLKWLRQQTGLVSQEPVLFNETIRANIAYGKGGDATETEIVSAAELSNAHGFISGLQQGYDTMVGERGVQLSGGQKQRVAIARAIVKDPKVLLLDEATSALDAESERVVQDALDRVMVNRTTVVVAHRLSTIKNADVIAVVKNGVIVEKGKHETLINIKDGVYASLVQLHLSAST.

Residues 1-59 (MDSVIESEEGLKVDSPNRADAETSNSKIHEEDEKELKTESDLKEEKKKTEKNKQEEDEK) form a disordered region. A compositionally biased stretch (basic and acidic residues) spans 9–59 (EGLKVDSPNRADAETSNSKIHEEDEKELKTESDLKEEKKKTEKNKQEEDEK). A helical membrane pass occupies residues 77 to 97 (IILMILGTIGAVGNGLGFPIM). Positions 80-368 (MILGTIGAVG…ASPCLSAFAA (289 aa)) constitute an ABC transmembrane type-1 1 domain. N-linked (GlcNAc...) asparagine glycosylation is present at Asn113. The next 5 helical transmembrane spans lie at 128–148 (FVYL…GWMI), 205–225 (IQLV…GWLL), 227–247 (LVMV…AIVI), 307–327 (GLGL…AVWY), and 336–356 (GYTG…SMSL). Positions 403-639 (IELNNVNFSY…PEGAYSQLIR (237 aa)) constitute an ABC transporter 1 domain. Asn409 is a glycosylation site (N-linked (GlcNAc...) asparagine). ATP is bound at residue 438 to 445 (GQSGSGKS). 3 N-linked (GlcNAc...) asparagine glycosylation sites follow: Asn505, Asn519, and Asn590. Residues 640–662 (LQEDTKQTEDSTDEQKLSMESMK) are compositionally biased toward basic and acidic residues. The tract at residues 640–672 (LQEDTKQTEDSTDEQKLSMESMKRSSLRKSSLS) is disordered. 2 positions are modified to phosphoserine: Ser657 and Ser660. The region spanning 730–1017 (LILGSIAAVL…SSSLSPDSSK (288 aa)) is the ABC transmembrane type-1 2 domain. Transmembrane regions (helical) follow at residues 731 to 751 (ILGS…GILI) and 774 to 794 (IIFM…TIFF). A glycan (N-linked (GlcNAc...) asparagine) is linked at Asn826. Transmembrane regions (helical) follow at residues 865–885 (VIAF…LPLI), 952–972 (GIVS…SYAA), and 986–1006 (TTFD…VAIS). In terms of domain architecture, ABC transporter 2 spans 1052 to 1289 (IELRHISFKY…KDGVYASLVQ (238 aa)). ATP is bound at residue 1087–1094 (GESGSGKS). 2 N-linked (GlcNAc...) asparagine glycosylation sites follow: Asn1141 and Asn1240.

This sequence belongs to the ABC transporter superfamily. ABCB family. Multidrug resistance exporter (TC 3.A.1.201) subfamily.

The protein localises to the membrane. The chain is ABC transporter B family member 21 (ABCB21) from Arabidopsis thaliana (Mouse-ear cress).